The following is a 264-amino-acid chain: Acetylglutamate kinase (264 aa).

Substrate contacts are provided by residues 50 to 51 (GG), Arg-72, and Asn-164.

Belongs to the acetylglutamate kinase family. ArgB subfamily.

Its subcellular location is the cytoplasm. It catalyses the reaction N-acetyl-L-glutamate + ATP = N-acetyl-L-glutamyl 5-phosphate + ADP. The protein operates within amino-acid biosynthesis; L-arginine biosynthesis; N(2)-acetyl-L-ornithine from L-glutamate: step 2/4. Functionally, catalyzes the ATP-dependent phosphorylation of N-acetyl-L-glutamate. The protein is Acetylglutamate kinase of Moritella profunda.